We begin with the raw amino-acid sequence, 467 residues long: UDP-N-acetylmuramate--L-alanine ligase (467 aa).

An ATP-binding site is contributed by 121-127 (GSHGKTT).

Belongs to the MurCDEF family.

The protein localises to the cytoplasm. The enzyme catalyses UDP-N-acetyl-alpha-D-muramate + L-alanine + ATP = UDP-N-acetyl-alpha-D-muramoyl-L-alanine + ADP + phosphate + H(+). Its pathway is cell wall biogenesis; peptidoglycan biosynthesis. Its function is as follows. Cell wall formation. This is UDP-N-acetylmuramate--L-alanine ligase from Parasynechococcus marenigrum (strain WH8102).